Consider the following 846-residue polypeptide: Neurofilament medium polypeptide (846 aa).

The span at 1 to 10 shows a compositional bias: polar residues; that stretch reads MSYTLDSLGN. The disordered stretch occupies residues 1 to 52; that stretch reads MSYTLDSLGNPSAYRRVPTETRSSFSRVSGSPSSGFRSQSWSRGSPSTVSSS. Ser-2 carries the N-acetylserine modification. Residues 2–104 are head; that stretch reads SYTLDSLGNP…LSRSNEKEQL (103 aa). The segment covering 22-45 has biased composition (low complexity); sequence RSSFSRVSGSPSSGFRSQSWSRGS. Residue Ser-31 is modified to Phosphoserine. Arg-43 is subject to Omega-N-methylarginine. O-linked (GlcNAc) threonine glycosylation occurs at Thr-48. Phosphoserine is present on Ser-98. Residues 100–411 form the IF rod domain; sequence EKEQLQGLND…KLLEGEETRF (312 aa). A coil 1A region spans residues 104–135; sequence LQGLNDRFAGYIEKVHYLEQQNKEIEAEIHAL. The interval 136 to 148 is linker 1; that stretch reads RQKQASHAQLGDA. A coil 1B region spans residues 149–247; that stretch reads YDQEIRELRA…EEEVADLLAQ (99 aa). The residue at position 225 (Ser-225) is a Phosphoserine. Positions 248–264 are linker 12; the sequence is IQASHITVERKDYLKTD. Residues 265–286 are coil 2A; that stretch reads ISTALKEIRSQLECHSDQNMHQ. A linker 2 region spans residues 287-290; sequence AEEW. The segment at 291 to 411 is coil 2B; the sequence is FKCRYAKLTE…KLLEGEETRF (121 aa). Position 319 is a phosphotyrosine (Tyr-319). Ser-345, Ser-417, and Ser-429 each carry phosphoserine. The tail stretch occupies residues 412-845; that stretch reads STFSGSITGP…HAIVKEVTQG (434 aa). A glycan (O-linked (GlcNAc) threonine) is linked at Thr-431. Phosphoserine is present on residues Ser-467 and Ser-483. The segment at 483–783 is disordered; sequence SAKEEKEEAE…GEDRSDDKVV (301 aa). Positions 489–499 are enriched in acidic residues; that stretch reads EEAEEKEEEPE. Positions 500 to 510 are enriched in basic and acidic residues; that stretch reads VEKSPVKSPEA. 2 positions are modified to phosphoserine: Ser-503 and Ser-507. Over residues 511–533 the composition is skewed to acidic residues; the sequence is KEEEEGEKEEEEEGQEEEEEEDE. Residues 534–553 show a composition bias toward basic and acidic residues; sequence GVKSDQAEEGGSEKEGSSEK. Residues Ser-537, Ser-545, Ser-550, and Ser-551 each carry the phosphoserine modification. Positions 554 to 575 are enriched in acidic residues; the sequence is DEGEQEEEGETEAEGEGEEAEA. Phosphothreonine is present on Thr-564. Over residues 576-603 the composition is skewed to basic and acidic residues; it reads KEEKKTEGKVEEMAIKEEIKVEKPEKAK. 9 positions are modified to phosphoserine: Ser-604, Ser-609, Ser-643, Ser-667, Ser-687, Ser-713, Ser-721, Ser-751, and Ser-767. Composition is skewed to basic and acidic residues over residues 610–675 and 687–709; these read PVEE…KAVE and SLEKDTKEEKPQQQEKVKEKAEE. Composition is skewed to basic and acidic residues over residues 718–730 and 746–758; these read GDKSPQESKKEDI and TQEKGSGQEEEKG. Residues 769 to 783 show a composition bias toward basic and acidic residues; that stretch reads AEEKKGEDRSDDKVV.

It belongs to the intermediate filament family. Forms heterodimers with NEFL; which can further hetero-oligomerize (in vitro). Forms heterodimers with INA (in vitro). There are a number of repeats of the tripeptide K-S-P, NFM is phosphorylated on a number of the serines in this motif. It is thought that phosphorylation of NFM results in the formation of interfilament cross bridges that are important in the maintenance of axonal caliber. In terms of processing, phosphorylation seems to play a major role in the functioning of the larger neurofilament polypeptides (NF-M and NF-H), the levels of phosphorylation being altered developmentally and coincidentally with a change in the neurofilament function. Post-translationally, phosphorylated in the head and rod regions by the PKC kinase PKN1, leading to the inhibition of polymerization. Expressed in the dorsal root ganglion neurons (at protein level).

The protein resides in the cytoplasm. It localises to the cytoskeleton. The protein localises to the cell projection. Its subcellular location is the axon. Functionally, neurofilaments usually contain three intermediate filament proteins: NEFL, NEFM, and NEFH which are involved in the maintenance of neuronal caliber. May additionally cooperate with the neuronal intermediate filament proteins PRPH and INA to form neuronal filamentous networks. This chain is Neurofilament medium polypeptide (Nefm), found in Rattus norvegicus (Rat).